The chain runs to 351 residues: Translation initiation factor eIF2B subunit beta (351 aa).

Belongs to the eIF-2B alpha/beta/delta subunits family. As to quaternary structure, component of the translation initiation factor 2B (eIF2B) complex which is a heterodecamer of two sets of five different subunits: alpha, beta, gamma, delta and epsilon. Subunits alpha, beta and delta comprise a regulatory subcomplex and subunits epsilon and gamma comprise a catalytic subcomplex. Within the complex, the hexameric regulatory complex resides at the center, with the two heterodimeric catalytic subcomplexes bound on opposite sides.

Its subcellular location is the cytoplasm. It localises to the cytosol. Its activity is regulated as follows. Activated by the chemical integrated stress response (ISR) inhibitor ISRIB which stimulates guanine nucleotide exchange factor activity for both phosphorylated and unphosphorylated eIF2. Functionally, acts as a component of the translation initiation factor 2B (eIF2B) complex, which catalyzes the exchange of GDP for GTP on eukaryotic initiation factor 2 (eIF2) gamma subunit. Its guanine nucleotide exchange factor activity is repressed when bound to eIF2 complex phosphorylated on the alpha subunit, thereby limiting the amount of methionyl-initiator methionine tRNA available to the ribosome and consequently global translation is repressed. The polypeptide is Translation initiation factor eIF2B subunit beta (EIF2B2) (Bos taurus (Bovine)).